We begin with the raw amino-acid sequence, 478 residues long: Divinyl ether synthase CYP74D3 (478 aa).

C432 lines the heme pocket.

Belongs to the cytochrome P450 family. 9-divinyl ether synthase subfamily. As to expression, not detected in leaves, stems or roots of healthy plants.

Its subcellular location is the cytoplasm. It localises to the cytosol. The catalysed reaction is (9S)-hydroperoxy-(10E,12Z)-octadecadienoate = colneleate + H2O. It carries out the reaction (9S)-hydroperoxy-(10E,12Z,15Z)-octadecatrienoate = colnelenate + H2O. Its function is as follows. Strictly inducible cytochrome P450 involved in the biosynthesis of the anti-fungal toxins colneleate and colnelenate. Can use (9S)-hydroperoxy-(10E,12Z)-octadecadienoate (9-HPOD) and (9S)-hydroperoxy-(10E,12Z,15Z)-octadecatrienoate (9-HPOT) as substrates, but has a very low activity with the corresponding 13-hydroperoxides (13-HPOD and 13-POT). The sequence is that of Divinyl ether synthase CYP74D3 from Nicotiana tabacum (Common tobacco).